The primary structure comprises 475 residues: Ankyrin repeat, SAM and basic leucine zipper domain-containing protein 1 (475 aa).

Residues 1-25 (MAAGALRGLPVAGGGESSESEDDGW) form a disordered region. S17, S18, and S20 each carry phosphoserine. ANK repeat units lie at residues 45-74 (EKKE…SVDS), 78-107 (YGWT…NASF), 110-144 (DKQS…DPNV), 148-177 (RLMT…EVNT), 181-210 (NGYT…NKML), and 214-243 (DGKM…PLEG). An SAM domain is found at 272–334 (SYTAFGDLEV…KILAALKELQ (63 aa)).

In terms of assembly, interacts with DDX4, PIWIL1, RANBP9 and TDRD1.

Its subcellular location is the cytoplasm. Its function is as follows. Plays a central role during spermatogenesis by repressing transposable elements and preventing their mobilization, which is essential for the germline integrity. Acts via the piRNA metabolic process, which mediates the repression of transposable elements during meiosis by forming complexes composed of piRNAs and Piwi proteins and governs the methylation and subsequent repression of transposons. Its association with pi-bodies suggests a participation in the primary piRNAs metabolic process. Required prior to the pachytene stage to facilitate the production of multiple types of piRNAs, including those associated with repeats involved in the regulation of retrotransposons. May act by mediating protein-protein interactions during germ cell maturation. In Nomascus leucogenys (Northern white-cheeked gibbon), this protein is Ankyrin repeat, SAM and basic leucine zipper domain-containing protein 1 (ASZ1).